The chain runs to 114 residues: Pancreatic progenitor cell differentiation and proliferation factor (114 aa).

The residue at position 9 (S9) is a Phosphoserine. Disordered regions lie at residues G22 to P47 and A75 to S114. Positions S23 to T33 are enriched in low complexity. Polar residues predominate over residues G102–S114.

It belongs to the PPDPF family.

In terms of biological role, probable regulator of exocrine pancreas development. The sequence is that of Pancreatic progenitor cell differentiation and proliferation factor (PPDPF) from Homo sapiens (Human).